The following is a 388-amino-acid chain: CUE domain-containing protein 1 (388 aa).

Residues 1–10 (MTSLFRRSSS) show a composition bias toward low complexity. The segment at 1 to 45 (MTSLFRRSSSGSGGGGATGARGAGTGAGDGSTAPQELNNSRPARQ) is disordered. Over residues 11-29 (GSGGGGATGARGAGTGAGD) the composition is skewed to gly residues. A CUE domain is found at 50–93 (EFNQAMDDFKTMFPNMDYDIIECVLRANSGAVDATIDQLLQMNL). Disordered regions lie at residues 152–178 (PTPP…WNPP), 196–225 (DSIQ…ACDQ), 270–302 (SQKS…TVSE), and 369–388 (DFRG…REGQ). Over residues 290 to 300 (VPGTSETNPTV) the composition is skewed to polar residues.

The polypeptide is CUE domain-containing protein 1 (Cuedc1) (Mus musculus (Mouse)).